Consider the following 390-residue polypeptide: Elongation factor Ts, mitochondrial (390 aa).

This sequence belongs to the EF-Ts family.

Its subcellular location is the mitochondrion. Associates with the EF-Tu.GDP complex and induces the exchange of GDP to GTP. It remains bound to the aminoacyl-tRNA.EF-Tu.GTP complex up to the GTP hydrolysis stage on the ribosome. This Plasmodium vivax (strain Salvador I) protein is Elongation factor Ts, mitochondrial.